We begin with the raw amino-acid sequence, 314 residues long: tRNA-cytidine(32) 2-sulfurtransferase (314 aa).

A PP-loop motif motif is present at residues 39–44 (SGGKDS). Residues Cys114, Cys117, and Cys205 each coordinate [4Fe-4S] cluster.

This sequence belongs to the TtcA family. Homodimer. Mg(2+) is required as a cofactor. Requires [4Fe-4S] cluster as cofactor.

Its subcellular location is the cytoplasm. It carries out the reaction cytidine(32) in tRNA + S-sulfanyl-L-cysteinyl-[cysteine desulfurase] + AH2 + ATP = 2-thiocytidine(32) in tRNA + L-cysteinyl-[cysteine desulfurase] + A + AMP + diphosphate + H(+). Its pathway is tRNA modification. Catalyzes the ATP-dependent 2-thiolation of cytidine in position 32 of tRNA, to form 2-thiocytidine (s(2)C32). The sulfur atoms are provided by the cysteine/cysteine desulfurase (IscS) system. This Cupriavidus metallidurans (strain ATCC 43123 / DSM 2839 / NBRC 102507 / CH34) (Ralstonia metallidurans) protein is tRNA-cytidine(32) 2-sulfurtransferase.